The primary structure comprises 262 residues: 4-hydroxy-2-oxo-heptane-1,7-dioate aldolase (262 aa).

The Proton acceptor role is filled by His45. Gln147 contacts substrate. Position 149 (Glu149) interacts with a divalent metal cation. Residues Ala174 and Asp175 each contribute to the substrate site. Asp175 is a binding site for a divalent metal cation.

Belongs to the HpcH/HpaI aldolase family. Homohexamer; trimer of dimers. The cofactor is a divalent metal cation.

The enzyme catalyses 4-hydroxy-2-oxoheptanedioate = succinate semialdehyde + pyruvate. It participates in aromatic compound metabolism; 4-hydroxyphenylacetate degradation; pyruvate and succinate semialdehyde from 4-hydroxyphenylacetate: step 7/7. Functionally, catalyzes the reversible retro-aldol cleavage of 4-hydroxy-2-ketoheptane-1,7-dioate (HKHD) to pyruvate and succinic semialdehyde. This chain is 4-hydroxy-2-oxo-heptane-1,7-dioate aldolase, found in Shigella boydii serotype 18 (strain CDC 3083-94 / BS512).